We begin with the raw amino-acid sequence, 323 residues long: Methionyl-tRNA formyltransferase (323 aa).

(6S)-5,6,7,8-tetrahydrofolate is bound at residue 113–116 (SLLP).

The protein belongs to the Fmt family.

It carries out the reaction L-methionyl-tRNA(fMet) + (6R)-10-formyltetrahydrofolate = N-formyl-L-methionyl-tRNA(fMet) + (6S)-5,6,7,8-tetrahydrofolate + H(+). Its function is as follows. Attaches a formyl group to the free amino group of methionyl-tRNA(fMet). The formyl group appears to play a dual role in the initiator identity of N-formylmethionyl-tRNA by promoting its recognition by IF2 and preventing the misappropriation of this tRNA by the elongation apparatus. This Nitrosococcus oceani (strain ATCC 19707 / BCRC 17464 / JCM 30415 / NCIMB 11848 / C-107) protein is Methionyl-tRNA formyltransferase.